The sequence spans 357 residues: Trans-enoyl reductase buaC (357 aa).

50–53 (VDTK) lines the NADP(+) pocket. 135–142 (TALVSACM) contacts substrate. NADP(+) contacts are provided by residues 170–173 (STAT), 193–196 (SPKN), Y211, and 258–259 (LN). 278-282 (ATLIT) contacts substrate. 347-348 (IS) contacts NADP(+).

This sequence belongs to the zinc-containing alcohol dehydrogenase family. Monomer.

It participates in mycotoxin biosynthesis. Its function is as follows. Trans-enoyl reductase; part of the gene cluster that mediates the biosynthesis of burnettramic acids, an unusual class of bolaamphiphilic pyrrolizidinediones that display potent antibacterial, antifungal, and cytotoxic activities. The first step of the biosynthesis of burnettramic acids is the hydroxylation of proline by the proline hydroxylase buaE to generate 4-hydroxyproline. The PKS-NRPS buaA and trans-enoyl reductase buaC construct the highly reduced polyketide chain, and the condensation (C) domain of buaA then catalyzes the amide bond formation with the activated 4-hydroxyproline. This is followed by the R domain releasing the nascent polyketide-peptide directly via a Dieckmann condensation to afford a tetramic acid fused to the hydroxyproline, generating the bicyclic pyrrolidinedione moiety. The cytochrome P450 monooxygenases buaD and buaG are likely responsible for the multiple hydroxylations on the polyketide chain and its terminus, although in the heterologous context, buaD does not appear to be required. Therefore, while buaG may be a multifunctional cytochrome P450 monooxygenase, it cannot be ruled out that the two secondary alcohols on the polyketide chain could have an acetate origin. Finally, the glycosyltransferase buaB transfers beta-D-mannose to the aglycone burnettramic acid A to form burnettramic acid A. Burnettramic acid B is a minor cis-pyrrolizidine epimer of burnettramic acid A and it is likely that small amounts of it form naturally in acidic environments. This Petromyces alliaceus (Aspergillus alliaceus) protein is Trans-enoyl reductase buaC.